We begin with the raw amino-acid sequence, 255 residues long: Small ribosomal subunit protein uS2 (255 aa).

The interval Gln-230–Gly-255 is disordered.

This sequence belongs to the universal ribosomal protein uS2 family.

The polypeptide is Small ribosomal subunit protein uS2 (Rhizobium etli (strain CIAT 652)).